A 304-amino-acid chain; its full sequence is UDP-N-acetylenolpyruvoylglucosamine reductase (304 aa).

One can recognise an FAD-binding PCMH-type domain in the interval 33–213 (IGGPADIMVI…LEITRDLTER (181 aa)). Residue arginine 177 is part of the active site. Serine 227 (proton donor) is an active-site residue. The active site involves glutamate 297.

It belongs to the MurB family. FAD serves as cofactor.

Its subcellular location is the cytoplasm. The catalysed reaction is UDP-N-acetyl-alpha-D-muramate + NADP(+) = UDP-N-acetyl-3-O-(1-carboxyvinyl)-alpha-D-glucosamine + NADPH + H(+). It participates in cell wall biogenesis; peptidoglycan biosynthesis. In terms of biological role, cell wall formation. In Alkaliphilus oremlandii (strain OhILAs) (Clostridium oremlandii (strain OhILAs)), this protein is UDP-N-acetylenolpyruvoylglucosamine reductase.